The following is a 306-amino-acid chain: Aspartate carbamoyltransferase catalytic subunit (306 aa).

Arg-53 and Thr-54 together coordinate carbamoyl phosphate. Residue Lys-82 coordinates L-aspartate. Residues Arg-103, His-131, and Gln-134 each coordinate carbamoyl phosphate. Arg-164 and Arg-226 together coordinate L-aspartate. Positions 263 and 264 each coordinate carbamoyl phosphate.

It belongs to the aspartate/ornithine carbamoyltransferase superfamily. ATCase family. In terms of assembly, heterododecamer (2C3:3R2) of six catalytic PyrB chains organized as two trimers (C3), and six regulatory PyrI chains organized as three dimers (R2).

The enzyme catalyses carbamoyl phosphate + L-aspartate = N-carbamoyl-L-aspartate + phosphate + H(+). It participates in pyrimidine metabolism; UMP biosynthesis via de novo pathway; (S)-dihydroorotate from bicarbonate: step 2/3. Functionally, catalyzes the condensation of carbamoyl phosphate and aspartate to form carbamoyl aspartate and inorganic phosphate, the committed step in the de novo pyrimidine nucleotide biosynthesis pathway. In Methanocaldococcus jannaschii (strain ATCC 43067 / DSM 2661 / JAL-1 / JCM 10045 / NBRC 100440) (Methanococcus jannaschii), this protein is Aspartate carbamoyltransferase catalytic subunit.